Here is a 643-residue protein sequence, read N- to C-terminus: 1-deoxy-D-xylulose-5-phosphate synthase (643 aa).

Thiamine diphosphate is bound by residues His-78 and 119 to 121; that span reads AHS. Asp-150 serves as a coordination point for Mg(2+). Thiamine diphosphate is bound by residues 151-152, Asn-179, Tyr-288, and Glu-370; that span reads GS. Residue Asn-179 participates in Mg(2+) binding.

This sequence belongs to the transketolase family. DXPS subfamily. Homodimer. Requires Mg(2+) as cofactor. The cofactor is thiamine diphosphate.

It catalyses the reaction D-glyceraldehyde 3-phosphate + pyruvate + H(+) = 1-deoxy-D-xylulose 5-phosphate + CO2. The protein operates within metabolic intermediate biosynthesis; 1-deoxy-D-xylulose 5-phosphate biosynthesis; 1-deoxy-D-xylulose 5-phosphate from D-glyceraldehyde 3-phosphate and pyruvate: step 1/1. In terms of biological role, catalyzes the acyloin condensation reaction between C atoms 2 and 3 of pyruvate and glyceraldehyde 3-phosphate to yield 1-deoxy-D-xylulose-5-phosphate (DXP). This Brucella canis (strain ATCC 23365 / NCTC 10854 / RM-666) protein is 1-deoxy-D-xylulose-5-phosphate synthase.